A 511-amino-acid chain; its full sequence is Glutamate/gamma-aminobutyrate antiporter (511 aa).

At 1–14 (MATLVQTGKAKQLT) the chain is on the cytoplasmic side. A helical transmembrane segment spans residues 15–35 (LLGFFAITASMVMAVYEYPTF). Residues 36-41 (ATSGFS) are Periplasmic-facing. A helical transmembrane segment spans residues 42–62 (LVFFLLLGGILWFIPVGLCAA). Residues 63-93 (EMATVDGWEEGGVFAWVSNTLGPRWGFAAIS) are Cytoplasmic-facing. The helical transmembrane segment at 94-114 (FGYLQIAIGFIPMLYFVLGAL) threads the bilayer. The Periplasmic portion of the chain corresponds to 115–127 (SYILKWPALNEDP). The chain crosses the membrane as a helical span at residues 128-148 (ITKTIAALIILWALALTQFGG). The Cytoplasmic portion of the chain corresponds to 149–157 (TKYTARIAK). A helical membrane pass occupies residues 158–178 (VGFFAGILLPAFILIALAAIY). The Periplasmic portion of the chain corresponds to 179–200 (LHSGAPVAIEMDSKTFFPDFSK). The chain crosses the membrane as a helical span at residues 201-221 (VGTLVVFVAFILSYMGVEASA). The Cytoplasmic portion of the chain corresponds to 222-239 (THVNEMSNPGRDYPLAML). Residues 240–260 (LLMVAAICLSSVGGLSIAMVI) form a helical membrane-spanning segment. Topologically, residues 261–291 (PGNEINLSAGVMQTFTVLMSHVAPEIEWTVR) are periplasmic. Residues 292-312 (VISALLLLGVLAEIASWIVGP) traverse the membrane as a helical segment. Over 313 to 335 (SRGMYVTAQKNLLPAAFAKMNKN) the chain is Cytoplasmic. The helical transmembrane segment at 336–356 (GVPVTLVISQLVITSIALIIL) threads the bilayer. The Periplasmic portion of the chain corresponds to 357 to 366 (TNTGGGNNMS). The chain crosses the membrane as a helical span at residues 367–387 (FLIALALTVVIYLCAYFMLFI). At 388–412 (GYIVLVLKHPDLKRTFNIPGGKGVK) the chain is on the cytoplasmic side. The helical transmembrane segment at 413-433 (LVVAIVGLLTSIMAFIVSFLP) threads the bilayer. Topologically, residues 434-445 (PDNIQGDSTDMY) are periplasmic. A helical membrane pass occupies residues 446–466 (VELLVVSFLVVLALPFILYAV). The Cytoplasmic segment spans residues 467 to 511 (HDRKGKANTGVTLEPINSQNAPKGHFFLHPRARSPHYIVMNDKKH).

This sequence belongs to the amino acid-polyamine-organocation (APC) superfamily. Glutamate:GABA antiporter (GGA) (TC 2.A.3.7) family.

It localises to the cell inner membrane. It catalyses the reaction 4-aminobutanoate(in) + L-glutamate(out) = 4-aminobutanoate(out) + L-glutamate(in). With respect to regulation, shows pH-dependent activity. The glutamate analog L-trans-pyrrolidine-2,4-dicarboxylic acid (L-PDC) blocks the uptake of glutamate by selective inhibition. Functionally, involved in glutaminase-dependent acid resistance. Exchanges extracellular glutamate (Glu) for intracellular gamma-aminobutyric acid (GABA) under acidic conditions. The ability to survive the extremely acidic conditions of the stomach is essential for successful colonization of the host by commensal and pathogenic bacteria. The sequence is that of Glutamate/gamma-aminobutyrate antiporter (gadC) from Escherichia coli O157:H7.